A 411-amino-acid polypeptide reads, in one-letter code: UPF0761 membrane protein PA14_51960 (411 aa).

Transmembrane regions (helical) follow at residues 36-56, 92-112, 132-152, 174-194, 207-229, and 244-264; these read LFAV…IPAF, HLTW…LVTI, FLLY…GFAV, LLGL…YSAV, GGVF…VSLF, and IFLL…VLVC.

This sequence belongs to the UPF0761 family.

It is found in the cell inner membrane. In Pseudomonas aeruginosa (strain UCBPP-PA14), this protein is UPF0761 membrane protein PA14_51960.